The sequence spans 283 residues: Apidaecins type 73 (283 aa).

Residues 1-18 (KNFALAILVVTFVVAVFG) form the signal peptide. 9 consecutive propeptides follow at residues 19-41 (NTNL…EAEP), 62-69 (EAEPEAEP), 90-97 (EAELEAEP), 118-125 (EAEPEAEP), 146-153 (EAELEAEP), 174-181 (EAEPEAEP), 202-209 (EAEPEAEP), 230-237 (EAEPEAEP), and 258-265 (EAKPEAKP). The interval 19–283 (NTNLDPPTRP…PQPRPPHPRI (265 aa)) is disordered. Residues 273-283 (IPQPRPPHPRI) show a composition bias toward pro residues.

The protein belongs to the apidaecin family.

The protein localises to the secreted. Its function is as follows. Apidaecins have bactericidal activity; predominantly against Gram-negative bacteria. They seem to interfere with cell propagation. This chain is Apidaecins type 73 (APID73), found in Apis mellifera (Honeybee).